A 194-amino-acid polypeptide reads, in one-letter code: Ras-like protein rasS (194 aa).

10–17 (GPGGVGKS) serves as a coordination point for GTP. The Effector region signature appears at 32–40 (YDPTLEDSY). Residues 57 to 61 (DTAGQ) and 116 to 119 (NKCD) contribute to the GTP site. Residues 168–194 (RQSNQHSNSQEQNTDQPIKKKKSCNLL) are disordered. The segment covering 169-180 (QSNQHSNSQEQN) has biased composition (low complexity). Cys-191 carries the cysteine methyl ester modification. Cys-191 carries S-geranylgeranyl cysteine lipidation. The propeptide at 192 to 194 (NLL) is removed in mature form.

The protein belongs to the small GTPase superfamily. Ras family.

The protein resides in the cell membrane. It carries out the reaction GTP + H2O = GDP + phosphate + H(+). Ras proteins bind GDP/GTP and possess intrinsic GTPase activity. This Dictyostelium discoideum (Social amoeba) protein is Ras-like protein rasS (rasS).